The chain runs to 568 residues: Cytosolic purine 5'-nucleotidase (568 aa).

The active-site Nucleophile is the aspartate 52. Aspartate 52 and aspartate 54 together coordinate IMP. Aspartate 52 and aspartate 54 together coordinate Mg(2+). The active-site Proton donor is aspartate 54. Residues arginine 144 and asparagine 154 each contribute to the ATP site. Residues arginine 202, aspartate 206, lysine 215, threonine 249, asparagine 250, serine 251, and lysine 292 each contribute to the IMP site. Residue aspartate 351 participates in Mg(2+) binding. ATP contacts are provided by glutamine 453 and arginine 456. The interval 528–568 (ISEIKPPNLFPQKPQEITHCHDEDDDEEEEEEEEEEEEEEE) is disordered. Residues 548–568 (HDEDDDEEEEEEEEEEEEEEE) are required for tetramer assembly. Residues 550–568 (EDDDEEEEEEEEEEEEEEE) are compositionally biased toward acidic residues.

This sequence belongs to the 5'(3')-deoxyribonucleotidase family. As to quaternary structure, homotetramer. Mg(2+) serves as cofactor.

It is found in the cytoplasm. The protein localises to the cytosol. The catalysed reaction is a ribonucleoside 5'-phosphate + H2O = a ribonucleoside + phosphate. It carries out the reaction a 2'-deoxyribonucleoside + a ribonucleoside 5'-phosphate = a ribonucleoside + a 2'-deoxyribonucleoside 5'-phosphate. The enzyme catalyses IMP + H2O = inosine + phosphate. It catalyses the reaction GMP + H2O = guanosine + phosphate. The catalysed reaction is dIMP + H2O = 2'-deoxyinosine + phosphate. It carries out the reaction dGMP + H2O = 2'-deoxyguanosine + phosphate. The enzyme catalyses XMP + H2O = xanthosine + phosphate. It catalyses the reaction inosine + GMP = guanosine + IMP. The catalysed reaction is dGMP + inosine = 2'-deoxyguanosine + IMP. It carries out the reaction dIMP + inosine = 2'-deoxyinosine + IMP. The enzyme catalyses inosine + UMP = uridine + IMP. It catalyses the reaction inosine + CMP = cytidine + IMP. The catalysed reaction is inosine + AMP = IMP + adenosine. With respect to regulation, allosterically activated by various compounds including ATP, 2,3-BPG/2,3-Bisphosphoglyceric acid and Ap4A/P1,P4-bis(5'-adenosyl) tetraphosphate. Binding of an allosteric activator is a prerequisiste to magnesium and substrate binding. Inhibited by inorganic phosphate. Functionally, broad specificity cytosolic 5'-nucleotidase that catalyzes the dephosphorylation of 6-hydroxypurine nucleoside 5'-monophosphates. In addition, possesses a phosphotransferase activity by which it can transfer a phosphate from a donor nucleoside monophosphate to an acceptor nucleoside, preferably inosine, deoxyinosine and guanosine. Has the highest activities for IMP and GMP followed by dIMP, dGMP and XMP. Could also catalyze the transfer of phosphates from pyrimidine monophosphates but with lower efficiency. Through these activities regulates the purine nucleoside/nucleotide pools within the cell. The polypeptide is Cytosolic purine 5'-nucleotidase (nt5c2) (Xenopus tropicalis (Western clawed frog)).